Reading from the N-terminus, the 175-residue chain is MAKQPTVLWAQRESLVYLTIEVDEAKIEELKGEGNKLHFQGSSKTDKYEATLEFFDEIDPASVKHTGSSTRVVEITVQKKTPAWWPRLLQNKGKVHWLKVDFGKWKDEDEDDEAEDAGAGIGGGMANGFDLNQYMSQMGGAGGADFGGLEDDEEDDDMPDLEDNEEEEGKNGTRA.

In terms of domain architecture, CS spans 2–89 (AKQPTVLWAQ…KTPAWWPRLL (88 aa)). Positions 109–175 (DEDDEAEDAG…EEEGKNGTRA (67 aa)) are disordered. The span at 148-168 (GLEDDEEDDDMPDLEDNEEEE) shows a compositional bias: acidic residues.

Belongs to the p23/wos2 family. As to expression, expressed in anterior and posterior neurons including ASE, AWC, ASI and ADL amphids and phasmid sensory neurons, peripheral neurons and ventral cord motorneurons. Additionally expressed in body wall muscle, pharynx, vulva, germ cells and intestine.

Functionally, co-chaperone for hsp90/daf-21. Involved in regulation of longevity, larval entry and exit from the dauer stage of development and response to environmental cues, such as oxidative stress, in a temperature-dependent manner. Role in daf-16 and hsf-1 inhibition at elevated temperatures. This is Co-chaperone protein daf-41 from Caenorhabditis elegans.